The sequence spans 468 residues: Kynureninase 2 (468 aa).

Pyridoxal 5'-phosphate-binding positions include Leu134, Thr135, 162-165 (FPSD), Asp247, His250, and Tyr272. An N6-(pyridoxal phosphate)lysine modification is found at Lys273. Positions 312 and 340 each coordinate pyridoxal 5'-phosphate.

The protein belongs to the kynureninase family. Homodimer. Requires pyridoxal 5'-phosphate as cofactor.

The protein localises to the cytoplasm. It carries out the reaction L-kynurenine + H2O = anthranilate + L-alanine + H(+). The catalysed reaction is 3-hydroxy-L-kynurenine + H2O = 3-hydroxyanthranilate + L-alanine + H(+). It functions in the pathway amino-acid degradation; L-kynurenine degradation; L-alanine and anthranilate from L-kynurenine: step 1/1. It participates in cofactor biosynthesis; NAD(+) biosynthesis; quinolinate from L-kynurenine: step 2/3. In terms of biological role, catalyzes the cleavage of L-kynurenine (L-Kyn) and L-3-hydroxykynurenine (L-3OHKyn) into anthranilic acid (AA) and 3-hydroxyanthranilic acid (3-OHAA), respectively. The polypeptide is Kynureninase 2 (bna5-2) (Aspergillus oryzae (strain ATCC 42149 / RIB 40) (Yellow koji mold)).